We begin with the raw amino-acid sequence, 228 residues long: Early nodulin-like protein 18 (228 aa).

Residues Met1–Ala26 form the signal peptide. Residues Lys28–His148 form the Phytocyanin domain. Asn29, Asn71, Asn94, and Asn145 each carry an N-linked (GlcNAc...) asparagine glycan. Cysteines 86 and 136 form a disulfide. The segment at His148–Thr211 is disordered. Residues Pro153–Ser170 are compositionally biased toward low complexity. Over residues Asp188–Ser204 the composition is skewed to basic and acidic residues. Residue Ser204 is the site of GPI-anchor amidated serine attachment. Residues Lys205 to Phe228 constitute a propeptide, removed in mature form.

The protein belongs to the early nodulin-like (ENODL) family. As to expression, mostly expressed in seedlings, roots and flowers, and, to a lower extent, in leaves, stems and seeds.

It is found in the cell membrane. Functionally, may act as a carbohydrate transporter. This chain is Early nodulin-like protein 18, found in Arabidopsis thaliana (Mouse-ear cress).